Here is a 402-residue protein sequence, read N- to C-terminus: Arginine biosynthesis bifunctional protein ArgJ (402 aa).

Residues Thr152, Lys178, Thr189, Glu275, Asn397, and Thr402 each coordinate substrate. The active-site Nucleophile is the Thr189.

This sequence belongs to the ArgJ family. In terms of assembly, heterotetramer of two alpha and two beta chains.

It is found in the cytoplasm. It catalyses the reaction N(2)-acetyl-L-ornithine + L-glutamate = N-acetyl-L-glutamate + L-ornithine. The catalysed reaction is L-glutamate + acetyl-CoA = N-acetyl-L-glutamate + CoA + H(+). It participates in amino-acid biosynthesis; L-arginine biosynthesis; L-ornithine and N-acetyl-L-glutamate from L-glutamate and N(2)-acetyl-L-ornithine (cyclic): step 1/1. Its pathway is amino-acid biosynthesis; L-arginine biosynthesis; N(2)-acetyl-L-ornithine from L-glutamate: step 1/4. In terms of biological role, catalyzes two activities which are involved in the cyclic version of arginine biosynthesis: the synthesis of N-acetylglutamate from glutamate and acetyl-CoA as the acetyl donor, and of ornithine by transacetylation between N(2)-acetylornithine and glutamate. This chain is Arginine biosynthesis bifunctional protein ArgJ, found in Lactiplantibacillus plantarum (strain ATCC BAA-793 / NCIMB 8826 / WCFS1) (Lactobacillus plantarum).